Here is a 236-residue protein sequence, read N- to C-terminus: UPF0257 lipoprotein YnfC (236 aa).

The signal sequence occupies residues 1-16 (MKKPLLLTLLCMILAG). Cysteine 17 carries the N-palmitoyl cysteine lipid modification. Residue cysteine 17 is the site of S-diacylglycerol cysteine attachment.

The protein belongs to the UPF0257 family.

Its subcellular location is the cell membrane. The chain is UPF0257 lipoprotein YnfC from Salmonella paratyphi C (strain RKS4594).